Consider the following 197-residue polypeptide: MTTLQERVAAHFAESIRAKQEAEKILVEPTVQAAELMLQCLMNDGKILACGNGGSAADAQHFAAEMTGRFEKERMELAAVALTTDTSALTAIGNDYGFDHVFSKQVRALGRAGDVLVGISTSGNSANVIEAVKAAHERDMHVIALTGRDGGKIAAMLKDTDVLLNVPHPRTARIQENHILLIHAMCDCIDSVLLEGM.

Residues 37–197 (MLQCLMNDGK…CIDSVLLEGM (161 aa)) form the SIS domain. 52-54 (NGG) lines the substrate pocket. Positions 61 and 65 each coordinate Zn(2+). Residues glutamate 65, 94–95 (ND), 120–122 (STS), serine 125, and glutamine 175 each bind substrate. Zn(2+)-binding residues include glutamine 175 and histidine 183.

Belongs to the SIS family. GmhA subfamily. In terms of assembly, homotetramer. Zn(2+) is required as a cofactor.

The protein localises to the cytoplasm. It catalyses the reaction 2 D-sedoheptulose 7-phosphate = D-glycero-alpha-D-manno-heptose 7-phosphate + D-glycero-beta-D-manno-heptose 7-phosphate. It participates in carbohydrate biosynthesis; D-glycero-D-manno-heptose 7-phosphate biosynthesis; D-glycero-alpha-D-manno-heptose 7-phosphate and D-glycero-beta-D-manno-heptose 7-phosphate from sedoheptulose 7-phosphate: step 1/1. Catalyzes the isomerization of sedoheptulose 7-phosphate in D-glycero-D-manno-heptose 7-phosphate. This chain is Phosphoheptose isomerase, found in Neisseria gonorrhoeae (strain ATCC 700825 / FA 1090).